Consider the following 47-residue polypeptide: Large ribosomal subunit protein eL40 (47 aa).

This sequence belongs to the eukaryotic ribosomal protein eL40 family.

The sequence is that of Large ribosomal subunit protein eL40 from Halobacterium salinarum (strain ATCC 29341 / DSM 671 / R1).